We begin with the raw amino-acid sequence, 202 residues long: Large ribosomal subunit protein uL4 (202 aa).

Polar residues predominate over residues 42–52 (GTKAQKSRSQV). Positions 42–70 (GTKAQKSRSQVSGTTKKSKKQKGGGARHG) are disordered.

Belongs to the universal ribosomal protein uL4 family. In terms of assembly, part of the 50S ribosomal subunit.

Functionally, one of the primary rRNA binding proteins, this protein initially binds near the 5'-end of the 23S rRNA. It is important during the early stages of 50S assembly. It makes multiple contacts with different domains of the 23S rRNA in the assembled 50S subunit and ribosome. Its function is as follows. Forms part of the polypeptide exit tunnel. The polypeptide is Large ribosomal subunit protein uL4 (Xylella fastidiosa (strain Temecula1 / ATCC 700964)).